The primary structure comprises 463 residues: MPGMEYSTVSKIYGPLMIVEGVKGVAYGEVVEIETESGEKRKGQVLEARENLAIVQVFEGTRDLDVKTTSVRFTGETLKVPVSMDMLGRIFNGIGKPIDGGPEIIPEDRRDVHGAPLNPVARAYPRDFIQTGISAIDGMNTLVRGQKLPIFSGSGLPHNMLAAQIARQAKVLGEEEQFAVVFAAMGITYEEANFFKKSFEETGAIERAVLFLNLADDPAIERIITPRMALTVAEYLAFDYDMQVLVILTDMTNYAEALREISAAREEVPGRRGYPGYMYTDLATIYERGGRVRGKKGSITQMPILTMPDDDITHPIPDLTGYITEGQIVLSRELHRKGIYPPIDVLPSLSRLMKDGIGKGRTREDHPQLAQQLYAAYAEGRSLRDLVAVVGEEALSETDRKYLKFADRFEREFIAQRYDEDRSIFETLDLGWELLAELPESELKRVRKEYILKYHPKYRKRGE.

Belongs to the ATPase alpha/beta chains family. As to quaternary structure, has multiple subunits with at least A(3), B(3), C, D, E, F, H, I and proteolipid K(x).

The protein localises to the cell membrane. Component of the A-type ATP synthase that produces ATP from ADP in the presence of a proton gradient across the membrane. The B chain is a regulatory subunit. This is A-type ATP synthase subunit B from Desulfurococcus sp. (strain SY).